Here is a 482-residue protein sequence, read N- to C-terminus: tRNA(Ile)-lysidine synthase (482 aa).

An ATP-binding site is contributed by Ser-28 to Ser-33.

Belongs to the tRNA(Ile)-lysidine synthase family.

The protein localises to the cytoplasm. It catalyses the reaction cytidine(34) in tRNA(Ile2) + L-lysine + ATP = lysidine(34) in tRNA(Ile2) + AMP + diphosphate + H(+). Its function is as follows. Ligates lysine onto the cytidine present at position 34 of the AUA codon-specific tRNA(Ile) that contains the anticodon CAU, in an ATP-dependent manner. Cytidine is converted to lysidine, thus changing the amino acid specificity of the tRNA from methionine to isoleucine. The sequence is that of tRNA(Ile)-lysidine synthase from Symbiobacterium thermophilum (strain DSM 24528 / JCM 14929 / IAM 14863 / T).